The sequence spans 65 residues: uncharacterized protein (65 aa).

A disordered region spans residues 1 to 30 (MPAASLESLLPPPPGKLPSPPLRPHGKFQR). The segment covering 10-23 (LPPPPGKLPSPPLR) has biased composition (pro residues).

This is an uncharacterized protein from Homo sapiens (Human).